Here is a 699-residue protein sequence, read N- to C-terminus: Polyribonucleotide nucleotidyltransferase (699 aa).

The Mg(2+) site is built by aspartate 485 and aspartate 491. A KH domain is found at 552-611 (PRITTIKINPEKIRDVIGKGGAVIRALTEETGTTIELEDDGTVRIASSNGEATKEAIRRI). The 69-residue stretch at 621-689 (GRIYNGKVIR…RQGRVRLSIK (69 aa)) folds into the S1 motif domain.

Belongs to the polyribonucleotide nucleotidyltransferase family. In terms of assembly, component of the RNA degradosome, which is a multiprotein complex involved in RNA processing and mRNA degradation. Mg(2+) serves as cofactor.

It localises to the cytoplasm. It catalyses the reaction RNA(n+1) + phosphate = RNA(n) + a ribonucleoside 5'-diphosphate. Functionally, involved in mRNA degradation. Catalyzes the phosphorolysis of single-stranded polyribonucleotides processively in the 3'- to 5'-direction. The polypeptide is Polyribonucleotide nucleotidyltransferase (Shewanella sp. (strain W3-18-1)).